A 349-amino-acid polypeptide reads, in one-letter code: tRNA-specific 2-thiouridylase MnmA (349 aa).

ATP is bound by residues 6 to 13 (LLSGGVDS) and M32. Catalysis depends on C103, which acts as the Nucleophile. C103 and C195 are joined by a disulfide. G127 is an ATP binding site. Residues 145–147 (KDQ) form an interaction with tRNA region. Catalysis depends on C195, which acts as the Cysteine persulfide intermediate.

The protein belongs to the MnmA/TRMU family.

The protein resides in the cytoplasm. The catalysed reaction is S-sulfanyl-L-cysteinyl-[protein] + uridine(34) in tRNA + AH2 + ATP = 2-thiouridine(34) in tRNA + L-cysteinyl-[protein] + A + AMP + diphosphate + H(+). Catalyzes the 2-thiolation of uridine at the wobble position (U34) of tRNA, leading to the formation of s(2)U34. The chain is tRNA-specific 2-thiouridylase MnmA from Pseudothermotoga lettingae (strain ATCC BAA-301 / DSM 14385 / NBRC 107922 / TMO) (Thermotoga lettingae).